Consider the following 270-residue polypeptide: Putative phosphoenolpyruvate synthase regulatory protein (270 aa).

150-157 lines the ADP pocket; the sequence is GVSRCGKT.

Belongs to the pyruvate, phosphate/water dikinase regulatory protein family. PSRP subfamily.

The catalysed reaction is [pyruvate, water dikinase] + ADP = [pyruvate, water dikinase]-phosphate + AMP + H(+). The enzyme catalyses [pyruvate, water dikinase]-phosphate + phosphate + H(+) = [pyruvate, water dikinase] + diphosphate. In terms of biological role, bifunctional serine/threonine kinase and phosphorylase involved in the regulation of the phosphoenolpyruvate synthase (PEPS) by catalyzing its phosphorylation/dephosphorylation. The sequence is that of Putative phosphoenolpyruvate synthase regulatory protein from Aeromonas salmonicida (strain A449).